The primary structure comprises 105 residues: Meiotically up-regulated gene 52 protein (105 aa).

Its function is as follows. Has a role in meiosis. The protein is Meiotically up-regulated gene 52 protein (mug52) of Schizosaccharomyces pombe (strain 972 / ATCC 24843) (Fission yeast).